The primary structure comprises 292 residues: Shikimate dehydrogenase (NADP(+)) (292 aa).

Residues 25-27 (SKS) and Thr-72 contribute to the shikimate site. Lys-76 acts as the Proton acceptor in catalysis. Residues Asn-97 and Asp-113 each contribute to the shikimate site. NADP(+)-binding positions include 137-141 (GAGGA), 161-166 (NRTQSK), and Met-230. Residue Tyr-232 participates in shikimate binding. Residue Gly-254 participates in NADP(+) binding.

Belongs to the shikimate dehydrogenase family. In terms of assembly, homodimer.

It catalyses the reaction shikimate + NADP(+) = 3-dehydroshikimate + NADPH + H(+). The protein operates within metabolic intermediate biosynthesis; chorismate biosynthesis; chorismate from D-erythrose 4-phosphate and phosphoenolpyruvate: step 4/7. Functionally, involved in the biosynthesis of the chorismate, which leads to the biosynthesis of aromatic amino acids. Catalyzes the reversible NADPH linked reduction of 3-dehydroshikimate (DHSA) to yield shikimate (SA). The chain is Shikimate dehydrogenase (NADP(+)) from Shewanella sp. (strain MR-4).